An 83-amino-acid polypeptide reads, in one-letter code: MARLMMTVGCLIFIVVLLDMMVPVSNTCPGYFGECGDGPEEGECCGMYNYCCKGRCLMLASCQKRRDAGRLLRSLKKLKLTTH.

Positions 1–27 (MARLMMTVGCLIFIVVLLDMMVPVSNT) are cleaved as a signal peptide.

This sequence belongs to the conopeptide I2-like superfamily. Post-translationally, contains 4 disulfide bonds. Expressed by the venom duct.

The protein localises to the secreted. Acts as a neurotoxin by inhibiting voltage-gated potassium channels (Kv). This Iotyrris olangoensis (Sea snail) protein is Turripeptide Lol11.2.